The primary structure comprises 655 residues: uncharacterized protein (655 aa).

The signal sequence occupies residues 1-23; it reads MKRTIKYLSFLGLIPFLSITTIS. The N-palmitoyl cysteine moiety is linked to residue Cys-24. A lipid anchor (S-diacylglycerol cysteine) is attached at Cys-24.

The protein belongs to the MG067/MG068/MG395 family.

It localises to the cell membrane. This is an uncharacterized protein from Mycoplasma capricolum subsp. capricolum (strain California kid / ATCC 27343 / NCTC 10154).